We begin with the raw amino-acid sequence, 55 residues long: uncharacterized protein (55 aa).

A helical transmembrane segment spans residues Leu-24–Ile-46.

The protein resides in the membrane. This is an uncharacterized protein from Dictyostelium discoideum (Social amoeba).